We begin with the raw amino-acid sequence, 186 residues long: Peptidyl-tRNA hydrolase (186 aa).

TRNA is bound at residue Tyr14. His19 serves as the catalytic Proton acceptor. TRNA-binding residues include Phe65, Asn67, and Asn113.

The protein belongs to the PTH family. Monomer.

The protein resides in the cytoplasm. It catalyses the reaction an N-acyl-L-alpha-aminoacyl-tRNA + H2O = an N-acyl-L-amino acid + a tRNA + H(+). In terms of biological role, hydrolyzes ribosome-free peptidyl-tRNAs (with 1 or more amino acids incorporated), which drop off the ribosome during protein synthesis, or as a result of ribosome stalling. Its function is as follows. Catalyzes the release of premature peptidyl moieties from peptidyl-tRNA molecules trapped in stalled 50S ribosomal subunits, and thus maintains levels of free tRNAs and 50S ribosomes. The polypeptide is Peptidyl-tRNA hydrolase (Limosilactobacillus reuteri (strain DSM 20016) (Lactobacillus reuteri)).